We begin with the raw amino-acid sequence, 254 residues long: Segregation and condensation protein A (254 aa).

The protein belongs to the ScpA family. In terms of assembly, component of a cohesin-like complex composed of ScpA, ScpB and the Smc homodimer, in which ScpA and ScpB bind to the head domain of Smc. The presence of the three proteins is required for the association of the complex with DNA.

The protein localises to the cytoplasm. Participates in chromosomal partition during cell division. May act via the formation of a condensin-like complex containing Smc and ScpB that pull DNA away from mid-cell into both cell halves. This Brevibacillus brevis (strain 47 / JCM 6285 / NBRC 100599) protein is Segregation and condensation protein A.